Here is a 773-residue protein sequence, read N- to C-terminus: ATP-dependent RNA helicase MAK5 (773 aa).

Residues 73–82 (KDSNKEKVGD) are compositionally biased toward basic and acidic residues. Disordered regions lie at residues 73–99 (KDSN…ESEL) and 114–144 (SAAS…VDED). Residues 83-99 (DQESVENESGSDSESEL) are compositionally biased toward acidic residues. Position 135 is a phosphothreonine (threonine 135). Residue serine 138 is modified to Phosphoserine. The Q motif motif lies at 171-199 (EWTNLAPLSMTILQSLQNLNFLRPTEIQK). Positions 202–399 (IPVIMQGVDV…SSSRQVKDRR (198 aa)) constitute a Helicase ATP-binding domain. Residue 215 to 222 (ASTGSGKT) participates in ATP binding. The short motif at 333–336 (DEAD) is the DEAD box element. The Helicase C-terminal domain maps to 452 to 615 (DLYCYYFLTM…STDLNSRSTN (164 aa)). A Phosphoserine modification is found at serine 678.

It belongs to the DEAD box helicase family. DDX24/MAK5 subfamily.

It localises to the nucleus. It is found in the nucleolus. The enzyme catalyses ATP + H2O = ADP + phosphate + H(+). Functionally, ATP-binding RNA helicase involved in the biogenesis of 60S ribosomal subunits and is required for the normal formation of 25S and 5.8S rRNAs. Required for the maintenance of dsRNA killer plasmid. This is ATP-dependent RNA helicase MAK5 (MAK5) from Saccharomyces cerevisiae (strain ATCC 204508 / S288c) (Baker's yeast).